The following is a 401-amino-acid chain: Phosphoglycerate kinase (401 aa).

Substrate contacts are provided by residues 21–23 (DFN), Arg36, 59–62 (HLGR), Arg119, and Arg160. Residues Lys212, Glu330, and 357–360 (GGDS) each bind ATP.

The protein belongs to the phosphoglycerate kinase family. In terms of assembly, monomer.

It is found in the cytoplasm. It catalyses the reaction (2R)-3-phosphoglycerate + ATP = (2R)-3-phospho-glyceroyl phosphate + ADP. It functions in the pathway carbohydrate degradation; glycolysis; pyruvate from D-glyceraldehyde 3-phosphate: step 2/5. This chain is Phosphoglycerate kinase, found in Limosilactobacillus reuteri subsp. reuteri (strain JCM 1112) (Lactobacillus reuteri).